We begin with the raw amino-acid sequence, 449 residues long: MGRYFGTSGIRGLFNECVTPELALKVGKAVGTYLGGGRVVVGMDTRTSSETLKSALISGLLSTGVEVIDIGLAPTPLTGFAIKLYEADAGVTITASHNPPEYNGIKVWQSNGMAYTPDMEAELERILESGNFRKVPWNEIGTLRRADPREEYIRKALEMVKLNDSYTVVVDSGNGAGSILSPYLQRELGNKVISLNSHPSGFFVRELEPNAKSLSGLAKTVRVMKADVGIAHDGDADRIGVVDDEGNFVEYEVMLSLIAGYMLRKFGKGKIVTTVDAGFALDDYVRPLGGEVIRTRVGDVAVADELAKHGGIFGGEPSGTWIIPQWNLTPDGIFAGALVLEMIDRLGPISELAREVPRYVTLRAKVPCPNEKKAKAMEIIAKEALKSFDYEKLIDIDGIRIENSDWWILFRPSGTEPIMRITLEAHTEDKAKELMEKAEKLVKEAVRRA.

S96 serves as the catalytic Phosphoserine intermediate. S96, D233, D235, and D237 together coordinate Mg(2+). S96 is modified (phosphoserine).

This sequence belongs to the phosphohexose mutase family. Mg(2+) is required as a cofactor. Activated by phosphorylation.

The catalysed reaction is alpha-D-glucosamine 1-phosphate = D-glucosamine 6-phosphate. In terms of biological role, catalyzes the conversion of glucosamine-6-phosphate to glucosamine-1-phosphate. This chain is Probable phosphoglucosamine mutase, found in Thermococcus gammatolerans (strain DSM 15229 / JCM 11827 / EJ3).